The sequence spans 115 residues: Superoxide reductase (115 aa).

Positions 14, 16, 41, 47, 102, and 105 each coordinate Fe cation.

Belongs to the desulfoferrodoxin family. As to quaternary structure, homotetramer. Requires Fe cation as cofactor.

It carries out the reaction reduced [rubredoxin] + superoxide + 2 H(+) = oxidized [rubredoxin] + H2O2. Its function is as follows. Uses electrons from reduced NADP, by way of rubredoxin and an oxidoreductase, to catalyze the reduction of superoxide to hydrogen peroxide. This chain is Superoxide reductase (sorA), found in Pyrococcus horikoshii (strain ATCC 700860 / DSM 12428 / JCM 9974 / NBRC 100139 / OT-3).